The primary structure comprises 263 residues: Orotidine 5'-phosphate decarboxylase (263 aa).

Residues Asp-38, 60-62 (KTH), 91-100 (DRKFADIGNT), Tyr-213, and Arg-232 each bind substrate. Lys-93 acts as the Proton donor in catalysis.

The protein belongs to the OMP decarboxylase family.

The enzyme catalyses orotidine 5'-phosphate + H(+) = UMP + CO2. Its pathway is pyrimidine metabolism; UMP biosynthesis via de novo pathway; UMP from orotate: step 2/2. This is Orotidine 5'-phosphate decarboxylase (PYR4) from Rhizomucor pusillus.